The chain runs to 471 residues: Nitrosourea synthase (471 aa).

Positions 177 to 328 are HO-like; that stretch reads MWLVQFAPDF…GRMAREKIIK (152 aa). Positions 189, 215, 225, 281, 311, 315, 318, 407, 409, and 448 each coordinate Fe(2+). The interval 397–459 is cupin; sequence VEPRGELSNT…ANIESDECVY (63 aa).

As to quaternary structure, homodimer. The cofactor is Fe(2+).

It carries out the reaction N(omega)-methyl-L-arginine + 2 NADH + 3 O2 + H(+) = N(delta)-hydroxy-N(omega)-methyl-N(omega)-nitroso-L-citrulline + 2 NAD(+) + 3 H2O. The enzyme catalyses N(omega)-methyl-L-arginine + NADH + O2 + H(+) = N(delta)-hydroxy-N(omega)-methyl-L-arginine + NAD(+) + H2O. The catalysed reaction is N(delta)-hydroxy-N(omega)-methyl-L-arginine + NADH + O2 = N(delta),N(omega')-dihydroxy-N(omega)-methyl-L-arginine + NAD(+) + H2O. It catalyses the reaction N(delta),N(omega')-dihydroxy-N(omega)-methyl-L-arginine + O2 = N(delta)-hydroxy-N(omega)-methyl-N(omega)-nitroso-L-citrulline + H2O. It carries out the reaction 2 N(delta)-hydroxy-N(omega)-methyl-N(omega)-nitroso-L-citrulline + AH2 = 2 N(delta)-hydroxy-N(omega)-methyl-L-citrulline + 2 nitric oxide + A. Its pathway is antibiotic biosynthesis. Involved in the biosynthesis of the glucosamine-nitrosourea antibiotic streptozotocin (SZN). Catalyzes a complex multi-step reaction: the overall reaction is an oxidative rearrangement of the guanidine group of N(omega)-methyl-L-arginine (L-NMA), generating an N-nitrosourea product. SznF first hydroxylates L-NMA to form N(delta)-hydroxy-N(omega)-methyl-L-arginine (L-HMA), which is further hydroxylated to give N(delta)-hydroxy-N(omega)-hydroxy-N(omega)-methyl-L-arginine (L-DHMA). Subsequently, an oxidative rearrangement converts this intermediate to N(delta)-hydroxy-N(omega)-methyl-N(omega)-nitroso-L-citrulline. This product is unstable, and degrades non-enzymically into nitric oxide and the denitrosated product N(delta)-hydroxy-N(omega)-methyl-L-citrulline. This is Nitrosourea synthase from Streptomyces achromogenes subsp. streptozoticus.